The chain runs to 129 residues: Putative zinc finger protein 702 (129 aa).

3 consecutive C2H2-type zinc fingers follow at residues 34–56 (YKCD…HRCH), 62–84 (YKCN…KAIH), and 90–112 (HKCN…HRLH).

The protein belongs to the krueppel C2H2-type zinc-finger protein family.

It localises to the nucleus. May be involved in transcriptional regulation. The sequence is that of Putative zinc finger protein 702 (ZNF702P) from Homo sapiens (Human).